Here is a 60-residue protein sequence, read N- to C-terminus: Metallothionein A (60 aa).

The interval 1 to 28 (MDPCECSKTGKCNCGTSCTCTNCSCKCC) is beta. Cysteine 4, cysteine 6, cysteine 12, cysteine 14, cysteine 18, cysteine 20, cysteine 23, cysteine 25, cysteine 28, cysteine 32, cysteine 33, cysteine 35, cysteine 36, cysteine 40, cysteine 43, cysteine 47, cysteine 49, cysteine 54, cysteine 58, and cysteine 59 together coordinate a divalent metal cation. An alpha region spans residues 29–60 (KKSCCSCCPSGCSKCASGCVCKGNSCDKSCCQ).

Belongs to the metallothionein superfamily. Type 1 family.

Its function is as follows. Metallothioneins have a high content of cysteine residues that bind various heavy metals. This is Metallothionein A (mta) from Cyprinodon sp. (Pupfish).